A 135-amino-acid chain; its full sequence is MNISDVAKITGLTSKAIRFYEEKGLVTPPMRSENGYRTYTQQHLNELTLLRQARQVGFNLEESGELVNLFNDPQRHSADVKRRTLEKVAEIERHIEELQSMRNQLLALANACPGDDSADCPIIENLSGCCHHRAG.

Positions 1 to 69 (MNISDVAKIT…LEESGELVNL (69 aa)) constitute an HTH merR-type domain. Positions 4-23 (SDVAKITGLTSKAIRFYEEK) form a DNA-binding region, H-T-H motif. Cu(+) contacts are provided by C112 and C120.

In terms of assembly, homodimer.

It is found in the cytoplasm. In terms of biological role, regulates the transcription of the copA and cueO genes. It detects cytoplasmic copper stress and activates transcription in response to increasing copper concentrations. This chain is HTH-type transcriptional regulator CueR (cueR), found in Escherichia coli O157:H7.